Reading from the N-terminus, the 406-residue chain is Vacuole membrane protein 1 (406 aa).

Residues 1-20 (MAENGKNCDQRRIAMSKDQH) show a composition bias toward basic and acidic residues. A disordered region spans residues 1–37 (MAENGKNCDQRRIAMSKDQHNGSLTDPSSVHEKKRRD). Ala-2 is modified (N-acetylalanine). At 2-77 (AENGKNCDQR…WTSKLWHRQS (76 aa)) the chain is on the cytoplasmic side. Residues 78-98 (IVVSFLLLLAALVATYYVEGA) form a helical membrane-spanning segment. At 99 to 109 (HQQYVQRIEKQ) the chain is on the extracellular side. A helical transmembrane segment spans residues 110 to 130 (FLLYAYWIGLGILSSVGLGTG). Over 131–250 (LHTFLLYLGP…ASRAKLAVQK (120 aa)) the chain is Cytoplasmic. Positions 173–316 (GAEGAISLWS…FVIVTFSKHI (144 aa)) are VTT domain. The helical transmembrane segment at 251–271 (LVQKVGFFGILACASIPNPLF) threads the bilayer. At 272 to 273 (DL) the chain is on the extracellular side. Residues 274 to 294 (AGITCGHFLVPFWTFFGATLI) traverse the membrane as a helical segment. The Cytoplasmic segment spans residues 295 to 305 (GKAIIKMHIQK). A helical membrane pass occupies residues 306-326 (IFVIVTFSKHIVEQMVTFIGA). Residues 327 to 363 (VPGIGPSLQKPFQEYLEAQRQKLHHRSEAGTPQGENW) are Extracellular-facing. The chain crosses the membrane as a helical span at residues 364–384 (LSWMFEKLVVAMVCYFVLSII). The Cytoplasmic segment spans residues 385-406 (NSMAQNYAKRIQQRLNSEEKTK).

Belongs to the VMP1 family. As to quaternary structure, interacts with BECN1. Interacts with TJP1. Interacts with TP53INP2. Interacts with TMEM41B. Interacts with ATP2A2, PLN and SLN; competes with PLN and SLN to prevent them from forming an inhibitory complex with ATP2A2. Interacts with ATG2A.

It localises to the endoplasmic reticulum-Golgi intermediate compartment membrane. The protein resides in the cell membrane. It is found in the vacuole membrane. The protein localises to the endoplasmic reticulum membrane. The catalysed reaction is a 1,2-diacyl-sn-glycero-3-phospho-L-serine(in) = a 1,2-diacyl-sn-glycero-3-phospho-L-serine(out). The enzyme catalyses cholesterol(in) = cholesterol(out). It catalyses the reaction a 1,2-diacyl-sn-glycero-3-phosphocholine(in) = a 1,2-diacyl-sn-glycero-3-phosphocholine(out). It carries out the reaction a 1,2-diacyl-sn-glycero-3-phosphoethanolamine(in) = a 1,2-diacyl-sn-glycero-3-phosphoethanolamine(out). Functionally, phospholipid scramblase involved in lipid homeostasis and membrane dynamics processes. Has phospholipid scramblase activity toward cholesterol and phosphatidylserine, as well as phosphatidylethanolamine and phosphatidylcholine. Required for autophagosome formation: participates in early stages of autophagosome biogenesis at the endoplasmic reticulum (ER) membrane by reequilibrating the leaflets of the ER as lipids are extracted by ATG2 (ATG2A or ATG2B) to mediate autophagosome assembly. Regulates ATP2A2 activity to control ER-isolation membrane contacts for autophagosome formation. In addition to autophagy, involved in other processes in which phospholipid scramblase activity is required. Modulates ER contacts with lipid droplets, mitochondria and endosomes. Plays an essential role in formation of cell junctions. Upon stress such as bacterial and viral infection, promotes formation of cytoplasmic vacuoles followed by cell death. Involved in the cytoplasmic vacuolization of acinar cells during the early stage of acute pancreatitis. The protein is Vacuole membrane protein 1 of Mus musculus (Mouse).